Here is a 354-residue protein sequence, read N- to C-terminus: N-acetyl-gamma-glutamyl-phosphate reductase (354 aa).

Cys156 is a catalytic residue.

It belongs to the NAGSA dehydrogenase family. Type 1 subfamily.

It localises to the cytoplasm. It catalyses the reaction N-acetyl-L-glutamate 5-semialdehyde + phosphate + NADP(+) = N-acetyl-L-glutamyl 5-phosphate + NADPH + H(+). It participates in amino-acid biosynthesis; L-arginine biosynthesis; N(2)-acetyl-L-ornithine from L-glutamate: step 3/4. Catalyzes the NADPH-dependent reduction of N-acetyl-5-glutamyl phosphate to yield N-acetyl-L-glutamate 5-semialdehyde. The polypeptide is N-acetyl-gamma-glutamyl-phosphate reductase (Bordetella pertussis (strain Tohama I / ATCC BAA-589 / NCTC 13251)).